A 177-amino-acid polypeptide reads, in one-letter code: Preprotein translocase subunit SECE1 (177 aa).

A chloroplast-targeting transit peptide spans 1-38; sequence MSLTAQFSPPVTGITRSLRDTKPSLSNLRVFPVYTEIR. The tract at residues 60–87 is disordered; it reads RDTAGSESESEATPSPAEESGSGEDKEV. Residues 64–79 are compositionally biased toward low complexity; that stretch reads GSESESEATPSPAEES. The chain crosses the membrane as a helical span at residues 140–160; it reads VVLGVIAGSSVVLLTVNFLLA.

It belongs to the SecE/SEC61-gamma family. As to quaternary structure, part of the Sec protein translocation apparatus. Interacts with SCY1 and ALB3.

The protein resides in the plastid. The protein localises to the chloroplast thylakoid membrane. Functionally, involved in the import/insertion pathway in the thylakoids. The signal recognition particle is not involved in the insertion of SECE1 in the thylakoid membrane. In Arabidopsis thaliana (Mouse-ear cress), this protein is Preprotein translocase subunit SECE1 (SECE1).